We begin with the raw amino-acid sequence, 411 residues long: Arginine deiminase 1 (411 aa).

The active-site Amidino-cysteine intermediate is the C401.

It belongs to the arginine deiminase family.

Its subcellular location is the cytoplasm. The enzyme catalyses L-arginine + H2O = L-citrulline + NH4(+). The protein operates within amino-acid degradation; L-arginine degradation via ADI pathway; carbamoyl phosphate from L-arginine: step 1/2. The polypeptide is Arginine deiminase 1 (arcA1) (Staphylococcus epidermidis (strain ATCC 12228 / FDA PCI 1200)).